Reading from the N-terminus, the 240-residue chain is Spore coat polysaccharide biosynthesis protein SpsF (240 aa).

Belongs to the CMP-NeuNAc synthase family.

It functions in the pathway spore coat biogenesis; spore coat polysaccharide biosynthesis. In Bacillus subtilis (strain 168), this protein is Spore coat polysaccharide biosynthesis protein SpsF (spsF).